Here is a 236-residue protein sequence, read N- to C-terminus: Putative (5-formylfuran-3-yl)methyl phosphate synthase (236 aa).

Catalysis depends on Lys38, which acts as the Schiff-base intermediate with substrate. Lys94 (proton acceptor) is an active-site residue.

The protein belongs to the MfnB family.

It carries out the reaction 2 D-glyceraldehyde 3-phosphate = 4-(hydroxymethyl)-2-furancarboxaldehyde phosphate + phosphate + 2 H2O. Its function is as follows. Catalyzes the formation of 4-(hydroxymethyl)-2-furancarboxaldehyde phosphate (4-HFC-P) from two molecules of glyceraldehyde-3-P (GA-3-P). This is Putative (5-formylfuran-3-yl)methyl phosphate synthase from Methylorubrum extorquens (Methylobacterium dichloromethanicum).